Consider the following 318-residue polypeptide: tRNA dimethylallyltransferase (318 aa).

9 to 16 (GATASGKT) provides a ligand contact to ATP. 11 to 16 (TASGKT) lines the substrate pocket. Interaction with substrate tRNA regions lie at residues 34–37 (DSAQ) and 158–162 (QRIIR).

It belongs to the IPP transferase family. Monomer. Requires Mg(2+) as cofactor.

It carries out the reaction adenosine(37) in tRNA + dimethylallyl diphosphate = N(6)-dimethylallyladenosine(37) in tRNA + diphosphate. Its function is as follows. Catalyzes the transfer of a dimethylallyl group onto the adenine at position 37 in tRNAs that read codons beginning with uridine, leading to the formation of N6-(dimethylallyl)adenosine (i(6)A). This chain is tRNA dimethylallyltransferase, found in Dichelobacter nodosus (strain VCS1703A).